A 433-amino-acid chain; its full sequence is Phosphoribosylamine--glycine ligase (433 aa).

An ATP-grasp domain is found at 110–317 (RNFMKKYGIE…FVDIMSAVVK (208 aa)). 137–194 (IEKLGDVAVKPSGLTGGKGVKVMGDQLPDLKAAKAYTSELLEKGSVVIEERFIGEEFT) contributes to the ATP binding site. 3 residues coordinate Mg(2+): Gln275, Glu287, and Asn289. Mn(2+) contacts are provided by Gln275, Glu287, and Asn289.

The protein belongs to the GARS family. Mg(2+) serves as cofactor. It depends on Mn(2+) as a cofactor.

The enzyme catalyses 5-phospho-beta-D-ribosylamine + glycine + ATP = N(1)-(5-phospho-beta-D-ribosyl)glycinamide + ADP + phosphate + H(+). It participates in purine metabolism; IMP biosynthesis via de novo pathway; N(1)-(5-phospho-D-ribosyl)glycinamide from 5-phospho-alpha-D-ribose 1-diphosphate: step 2/2. The protein is Phosphoribosylamine--glycine ligase of Methanosarcina barkeri (strain Fusaro / DSM 804).